The primary structure comprises 371 residues: GDP-mannose transporter (371 aa).

Residues 1 to 51 lie on the Cytoplasmic side of the membrane; the sequence is MGVISFYLIGQLLYLIRKKYTTTYRQQQQHQYNMDSKHSTSSSSSGSLATR. The helical transmembrane segment at 52–72 threads the bilayer; it reads ISNSGPISIAAYCLSSILMTV. At 73 to 80 the chain is on the lumenal side; sequence TNKYVLSG. A helical transmembrane segment spans residues 81–101; sequence FSFNLNFFLLAVQSIVCIVTI. The Cytoplasmic portion of the chain corresponds to 102–121; that stretch reads GSLKSLNIITYRQFNKDEAK. A helical membrane pass occupies residues 122-138; the sequence is KWSPIAFLLVAMIYTSS. Topologically, residues 139–145 are lumenal; that stretch reads KALQYLS. A helical membrane pass occupies residues 146–162; sequence IPVYTIFKNLTIILIAY. Residues 163–171 are Cytoplasmic-facing; the sequence is GEVIWFGGK. The helical transmembrane segment at 172–192 threads the bilayer; it reads VTTMALSSFLLMVLSSVIAYY. The Lumenal segment spans residues 193-206; the sequence is GDNAAVKSHDDAFA. Residues 207 to 227 traverse the membrane as a helical segment; sequence LYLGYFWMLTNCFASAAFVLI. Residues 228-241 lie on the Cytoplasmic side of the membrane; it reads MRKRIKLTNFKDFD. Residues 242-262 form a helical membrane-spanning segment; sequence TMYYNNLLSIPILLICSFIFE. The Lumenal segment spans residues 263-281; that stretch reads DWSSANVSLNFPADNRVTT. Residue Asn268 is glycosylated (N-linked (GlcNAc...) asparagine). Residues 282 to 302 form a helical membrane-spanning segment; that stretch reads ITAMILSGASSVGISYCSAWC. At 303–309 the chain is on the cytoplasmic side; sequence VRVTSST. Residues 310–329 traverse the membrane as a helical segment; that stretch reads TYSMVGALNKLPIALSGLIF. Residues 330 to 332 are Lumenal-facing; that stretch reads FEA. A helical transmembrane segment spans residues 333-355; the sequence is AVNFWSVSSIFVGFGAGLVYAVA. The Cytoplasmic portion of the chain corresponds to 356–371; it reads KQKQQKEQSQQLPTTK.

It belongs to the TPT transporter family. SLC35D subfamily. As to quaternary structure, homooligomer.

The protein resides in the golgi apparatus membrane. It is found in the cytoplasmic vesicle membrane. Its subcellular location is the endoplasmic reticulum membrane. In terms of biological role, involved in the import of GDP-mannose from the cytoplasm into the Golgi lumen. Involved in hyphal formation. This is GDP-mannose transporter (VRG4) from Candida albicans (strain SC5314 / ATCC MYA-2876) (Yeast).